Consider the following 406-residue polypeptide: 2,3-bisphosphoglycerate-independent phosphoglycerate mutase (406 aa).

The protein belongs to the BPG-independent phosphoglycerate mutase family. A-PGAM subfamily.

It carries out the reaction (2R)-2-phosphoglycerate = (2R)-3-phosphoglycerate. The protein operates within carbohydrate degradation; glycolysis; pyruvate from D-glyceraldehyde 3-phosphate: step 3/5. Functionally, catalyzes the interconversion of 2-phosphoglycerate and 3-phosphoglycerate. The sequence is that of 2,3-bisphosphoglycerate-independent phosphoglycerate mutase from Methanococcus maripaludis (strain C7 / ATCC BAA-1331).